The sequence spans 118 residues: Small ribosomal subunit protein uS13 (118 aa).

Positions 95 to 118 (LPVRGQRTRTNARTRKGPKKLINK) are disordered.

The protein belongs to the universal ribosomal protein uS13 family. As to quaternary structure, part of the 30S ribosomal subunit. Forms a loose heterodimer with protein S19. Forms two bridges to the 50S subunit in the 70S ribosome.

Functionally, located at the top of the head of the 30S subunit, it contacts several helices of the 16S rRNA. In the 70S ribosome it contacts the 23S rRNA (bridge B1a) and protein L5 of the 50S subunit (bridge B1b), connecting the 2 subunits; these bridges are implicated in subunit movement. Contacts the tRNAs in the A and P-sites. The chain is Small ribosomal subunit protein uS13 from Blochmanniella floridana.